The following is a 426-amino-acid chain: Enolase (426 aa).

Gly-41 is a binding site for phosphoenolpyruvate. Ser-43 serves as a coordination point for Mg(2+). Position 165 (Glu-165) interacts with phosphoenolpyruvate. 2 residues coordinate (2R)-2-phosphoglycerate: Glu-165 and Glu-206. Glu-206 functions as the Proton donor in the catalytic mechanism. Asp-243, Glu-286, and Asp-313 together coordinate Mg(2+). 5 residues coordinate phosphoenolpyruvate: Asp-313, Lys-338, Arg-367, Ser-368, and Lys-389. Positions 338, 367, and 368 each coordinate (2R)-2-phosphoglycerate. Lys-338 functions as the Proton acceptor in the catalytic mechanism.

The protein belongs to the enolase family. In terms of assembly, homodimer. Mg(2+) is required as a cofactor.

The protein localises to the cytoplasm. The protein resides in the secreted. It is found in the cell surface. The catalysed reaction is (2R)-2-phosphoglycerate = phosphoenolpyruvate + H2O. Its pathway is carbohydrate degradation; glycolysis; pyruvate from D-glyceraldehyde 3-phosphate: step 4/5. Its function is as follows. Catalyzes the reversible conversion of 2-phosphoglycerate (2-PG) into phosphoenolpyruvate (PEP). It is essential for the degradation of carbohydrates via glycolysis. The sequence is that of Enolase from Chloroflexus aurantiacus (strain ATCC 29366 / DSM 635 / J-10-fl).